The chain runs to 167 residues: Probable chemoreceptor glutamine deamidase CheD (167 aa).

It belongs to the CheD family.

It catalyses the reaction L-glutaminyl-[protein] + H2O = L-glutamyl-[protein] + NH4(+). Its function is as follows. Probably deamidates glutamine residues to glutamate on methyl-accepting chemotaxis receptors (MCPs), playing an important role in chemotaxis. In Natronomonas pharaonis (strain ATCC 35678 / DSM 2160 / CIP 103997 / JCM 8858 / NBRC 14720 / NCIMB 2260 / Gabara) (Halobacterium pharaonis), this protein is Probable chemoreceptor glutamine deamidase CheD.